A 308-amino-acid polypeptide reads, in one-letter code: uncharacterized protein (308 aa).

The interval 19–43 (EPQASGAGPAQTPPPVTVPMTPPSK) is disordered. Over residues 29–43 (QTPPPVTVPMTPPSK) the composition is skewed to pro residues.

This is an uncharacterized protein from Deinococcus radiodurans (strain ATCC 13939 / DSM 20539 / JCM 16871 / CCUG 27074 / LMG 4051 / NBRC 15346 / NCIMB 9279 / VKM B-1422 / R1).